The chain runs to 250 residues: UPF0524 protein C3orf70 (250 aa).

Residues 201–250 (ESCDEDTEEGAELSSEEDYSPESSWEPDECTLLSPSQSDLEVIETIETTV) are disordered. Positions 202-229 (SCDEDTEEGAELSSEEDYSPESSWEPDE) are enriched in acidic residues.

It belongs to the UPF0524 family.

Its function is as follows. May play a role in neuronal and neurobehavioral development. In Homo sapiens (Human), this protein is UPF0524 protein C3orf70 (C3orf70).